Consider the following 526-residue polypeptide: Threonine synthase 1, chloroplastic (526 aa).

The N-terminal 40 residues, 1 to 40 (MASSCLFNASVSSLNPKQDPIRRHRSTSLLRHRPVVISCT), are a transit peptide targeting the chloroplast. Residues 142–144 (PYG), 165–167 (SAF), Asn172, Leu173, Lys181, and Asn187 contribute to the S-adenosyl-L-methionine site. The residue at position 203 (Lys203) is an N6-(pyridoxal phosphate)lysine. Residues 335–339 (GNLGN) and Thr472 contribute to the pyridoxal 5'-phosphate site.

It belongs to the threonine synthase family. In terms of assembly, homodimer. It depends on pyridoxal 5'-phosphate as a cofactor.

It is found in the plastid. The protein localises to the chloroplast. The catalysed reaction is O-phospho-L-homoserine + H2O = L-threonine + phosphate. The protein operates within amino-acid biosynthesis; L-threonine biosynthesis; L-threonine from L-aspartate: step 5/5. Allosterically activated by S-adenosyl-L-methionine (SAM). Activated by S-adenosyl-L-ethionine, 5'-amino-5'-deoxyadenosine, sinefungin and 5'-deoxy-5-methylthioadenosine. Inhibited by AMP. In terms of biological role, catalyzes the gamma-elimination of phosphate from L-phosphohomoserine and the beta-addition of water to produce L-threonine. This Arabidopsis thaliana (Mouse-ear cress) protein is Threonine synthase 1, chloroplastic (TS1).